The chain runs to 220 residues: Phosphatidylserine decarboxylase proenzyme (220 aa).

The active-site Schiff-base intermediate with substrate; via pyruvic acid is the Ser189. Ser189 carries the post-translational modification Pyruvic acid (Ser); by autocatalysis.

Belongs to the phosphatidylserine decarboxylase family. PSD-A subfamily. Heterodimer of a large membrane-associated beta subunit and a small pyruvoyl-containing alpha subunit. The cofactor is pyruvate. In terms of processing, is synthesized initially as an inactive proenzyme. Formation of the active enzyme involves a self-maturation process in which the active site pyruvoyl group is generated from an internal serine residue via an autocatalytic post-translational modification. Two non-identical subunits are generated from the proenzyme in this reaction, and the pyruvate is formed at the N-terminus of the alpha chain, which is derived from the carboxyl end of the proenzyme. The post-translation cleavage follows an unusual pathway, termed non-hydrolytic serinolysis, in which the side chain hydroxyl group of the serine supplies its oxygen atom to form the C-terminus of the beta chain, while the remainder of the serine residue undergoes an oxidative deamination to produce ammonia and the pyruvoyl prosthetic group on the alpha chain.

The protein localises to the cell membrane. The enzyme catalyses a 1,2-diacyl-sn-glycero-3-phospho-L-serine + H(+) = a 1,2-diacyl-sn-glycero-3-phosphoethanolamine + CO2. It participates in phospholipid metabolism; phosphatidylethanolamine biosynthesis; phosphatidylethanolamine from CDP-diacylglycerol: step 2/2. Its function is as follows. Catalyzes the formation of phosphatidylethanolamine (PtdEtn) from phosphatidylserine (PtdSer). In Pelobacter propionicus (strain DSM 2379 / NBRC 103807 / OttBd1), this protein is Phosphatidylserine decarboxylase proenzyme.